Consider the following 104-residue polypeptide: uncharacterized protein (104 aa).

The tract at residues Ser-62 to Lys-92 is disordered.

This is an uncharacterized protein from Human adenovirus B serotype 7 (HAdV-7).